We begin with the raw amino-acid sequence, 391 residues long: 3-ketoacyl-CoA thiolase (391 aa).

Residue Cys-95 is the Acyl-thioester intermediate of the active site. Residues His-347 and Cys-377 each act as proton acceptor in the active site.

Belongs to the thiolase-like superfamily. Thiolase family. As to quaternary structure, heterotetramer of two alpha chains (FadB) and two beta chains (FadA).

It localises to the cytoplasm. The catalysed reaction is an acyl-CoA + acetyl-CoA = a 3-oxoacyl-CoA + CoA. It participates in lipid metabolism; fatty acid beta-oxidation. Functionally, catalyzes the final step of fatty acid oxidation in which acetyl-CoA is released and the CoA ester of a fatty acid two carbons shorter is formed. The chain is 3-ketoacyl-CoA thiolase from Pseudomonas aeruginosa (strain UCBPP-PA14).